Reading from the N-terminus, the 349-residue chain is Ion-translocating oxidoreductase complex subunit D (349 aa).

A run of 3 helical transmembrane segments spans residues 36-56, 77-99, and 124-144; these read CAFF…VALS, SAML…WMIV, and AMAA…SWIA. FMN phosphoryl threonine is present on threonine 185. 5 consecutive transmembrane segments (helical) span residues 212–232, 239–259, 265–285, 291–311, and 315–335; these read GTGV…LVLL, WHIS…GFLL, ASPL…FIAT, ATSP…VYII, and GGYP…APFI.

Belongs to the NqrB/RnfD family. In terms of assembly, the complex is composed of six subunits: RnfA, RnfB, RnfC, RnfD, RnfE and RnfG. Requires FMN as cofactor.

It localises to the cell inner membrane. Its function is as follows. Part of a membrane-bound complex that couples electron transfer with translocation of ions across the membrane. The sequence is that of Ion-translocating oxidoreductase complex subunit D from Shewanella sp. (strain ANA-3).